The primary structure comprises 534 residues: Cytochrome P450 monooxygenase CYP4 (534 aa).

A helical membrane pass occupies residues 46–66; that stretch reads TIIFCVLMSLVGYIVSRIIWG. Asn-220 is a glycosylation site (N-linked (GlcNAc...) asparagine). A heme-binding site is contributed by Cys-477. N-linked (GlcNAc...) asparagine glycosylation is present at Asn-515.

Belongs to the cytochrome P450 family. The cofactor is heme.

Its subcellular location is the membrane. The protein operates within secondary metabolite biosynthesis. Its function is as follows. Cytochrome P450 monooxygenase; part of the gene cluster that mediates the biosynthesis of a tyrosine-derived cytochalasan acting as a fungal signal recognized by resistant rice plants and leads to avirulence in Pi33 resistant rice cultivars. The first step in the pathway is catalyzed by the hybrid PKS-NRPS ACE1, assisted by the enoyl reductase RAP1, that are responsible for fusion of the tyrosine precursor and the polyketide backbone. The polyketide synthase module (PKS) of ACE1 is responsible for the synthesis of the polyketide backbone and the downstream nonribosomal peptide synthetase (NRPS) amidates the carboxyl end of the polyketide with the tyrosine precursor. Because ACE1 lacks a designated enoylreductase (ER) domain, the required activity is provided the enoyl reductase RAP1. Reduction by the hydrolyase ORFZ, followed by dehydration and intra-molecular Diels-Alder cyclization by the Diels-Alderase ORF3 then yield the required isoindolone-fused macrocycle. A number of oxidative steps catalyzed by the tailoring enzymes identified within the cluster, including cytochrome P450 monooxygenases CYP1 to CYP4, the FAD-linked oxidoreductase OXR2 and the short-chain dehydrogenase/reductase OXR1, are further required to afford the final cytochalasans that confer avirulence and which have still to be identified. The monooxygenase CYP1 has been shown to be a site-selective C-18 hydroxylase whereas the function of CYP3 is the site-selective epoxidation of the C-6/C-7 olefin that is present in some intermediate compounds. Finally, SYN2 and RAP2 are not required for avirulence in Pi33 resistant rice cultivars. In Pyricularia oryzae (strain 70-15 / ATCC MYA-4617 / FGSC 8958) (Rice blast fungus), this protein is Cytochrome P450 monooxygenase CYP4.